Consider the following 217-residue polypeptide: Uracil-DNA glycosylase (217 aa).

Residue D62 is the Proton acceptor of the active site.

This sequence belongs to the uracil-DNA glycosylase (UDG) superfamily. UNG family.

Its subcellular location is the cytoplasm. It catalyses the reaction Hydrolyzes single-stranded DNA or mismatched double-stranded DNA and polynucleotides, releasing free uracil.. Excises uracil residues from the DNA which can arise as a result of misincorporation of dUMP residues by DNA polymerase or due to deamination of cytosine. In Streptococcus gordonii (strain Challis / ATCC 35105 / BCRC 15272 / CH1 / DL1 / V288), this protein is Uracil-DNA glycosylase.